The following is a 485-amino-acid chain: UDP-N-acetylmuramoyl-L-alanyl-D-glutamate--2,6-diaminopimelate ligase (485 aa).

UDP-N-acetyl-alpha-D-muramoyl-L-alanyl-D-glutamate is bound by residues L27 and S29. ATP is bound at residue 106-112; the sequence is GTSGKTS. UDP-N-acetyl-alpha-D-muramoyl-L-alanyl-D-glutamate-binding positions include 148 to 149, S175, Q181, and R183; that span reads TT. N6-carboxylysine is present on K215. Residues R382, 406–409, G454, and E458 each bind meso-2,6-diaminopimelate; that span reads DNPR. A Meso-diaminopimelate recognition motif motif is present at residues 406–409; the sequence is DNPR.

The protein belongs to the MurCDEF family. MurE subfamily. It depends on Mg(2+) as a cofactor. Carboxylation is probably crucial for Mg(2+) binding and, consequently, for the gamma-phosphate positioning of ATP.

The protein localises to the cytoplasm. The catalysed reaction is UDP-N-acetyl-alpha-D-muramoyl-L-alanyl-D-glutamate + meso-2,6-diaminopimelate + ATP = UDP-N-acetyl-alpha-D-muramoyl-L-alanyl-gamma-D-glutamyl-meso-2,6-diaminopimelate + ADP + phosphate + H(+). Its pathway is cell wall biogenesis; peptidoglycan biosynthesis. Its function is as follows. Catalyzes the addition of meso-diaminopimelic acid to the nucleotide precursor UDP-N-acetylmuramoyl-L-alanyl-D-glutamate (UMAG) in the biosynthesis of bacterial cell-wall peptidoglycan. The chain is UDP-N-acetylmuramoyl-L-alanyl-D-glutamate--2,6-diaminopimelate ligase from Bradyrhizobium diazoefficiens (strain JCM 10833 / BCRC 13528 / IAM 13628 / NBRC 14792 / USDA 110).